The primary structure comprises 284 residues: Ribosomal RNA small subunit methyltransferase A (284 aa).

The S-adenosyl-L-methionine site is built by asparagine 26, leucine 28, glycine 53, glutamate 74, aspartate 97, and asparagine 127.

Belongs to the class I-like SAM-binding methyltransferase superfamily. rRNA adenine N(6)-methyltransferase family. RsmA subfamily.

Its subcellular location is the cytoplasm. It catalyses the reaction adenosine(1518)/adenosine(1519) in 16S rRNA + 4 S-adenosyl-L-methionine = N(6)-dimethyladenosine(1518)/N(6)-dimethyladenosine(1519) in 16S rRNA + 4 S-adenosyl-L-homocysteine + 4 H(+). In terms of biological role, specifically dimethylates two adjacent adenosines (A1518 and A1519) in the loop of a conserved hairpin near the 3'-end of 16S rRNA in the 30S particle. May play a critical role in biogenesis of 30S subunits. The chain is Ribosomal RNA small subunit methyltransferase A from Anaeromyxobacter dehalogenans (strain 2CP-1 / ATCC BAA-258).